Here is a 275-residue protein sequence, read N- to C-terminus: Dolichyl-diphosphooligosaccharide--protein glycosyltransferase subunit delta (275 aa).

The first 18 residues, Met-1–Ala-18, serve as a signal peptide directing secretion. A run of 3 helical transmembrane segments spans residues Val-179 to Ile-199, Val-214 to Val-234, and Ser-241 to Val-261.

Belongs to the SWP1 family. Component of the oligosaccharyltransferase (OST) complex.

It is found in the endoplasmic reticulum membrane. It functions in the pathway protein modification; protein glycosylation. Subunit of the oligosaccharyl transferase (OST) complex that catalyzes the initial transfer of a defined glycan (Glc(3)Man(9)GlcNAc(2) in eukaryotes) from the lipid carrier dolichol-pyrophosphate to an asparagine residue within an Asn-X-Ser/Thr consensus motif in nascent polypeptide chains, the first step in protein N-glycosylation. N-glycosylation occurs cotranslationally and the complex associates with the Sec61 complex at the channel-forming translocon complex that mediates protein translocation across the endoplasmic reticulum (ER). All subunits are required for a maximal enzyme activity. Plays a role in cell wall integrity and in engulfment by macrophages. In Candida albicans (strain SC5314 / ATCC MYA-2876) (Yeast), this protein is Dolichyl-diphosphooligosaccharide--protein glycosyltransferase subunit delta.